Here is a 420-residue protein sequence, read N- to C-terminus: Serine hydroxymethyltransferase (420 aa).

Residues Leu-123 and 127–129 each bind (6S)-5,6,7,8-tetrahydrofolate; that span reads GHL. Position 232 is an N6-(pyridoxal phosphate)lysine (Lys-232). (6S)-5,6,7,8-tetrahydrofolate is bound at residue 357–359; that stretch reads SPF.

The protein belongs to the SHMT family. Homodimer. Pyridoxal 5'-phosphate serves as cofactor.

It localises to the cytoplasm. The catalysed reaction is (6R)-5,10-methylene-5,6,7,8-tetrahydrofolate + glycine + H2O = (6S)-5,6,7,8-tetrahydrofolate + L-serine. It functions in the pathway one-carbon metabolism; tetrahydrofolate interconversion. It participates in amino-acid biosynthesis; glycine biosynthesis; glycine from L-serine: step 1/1. In terms of biological role, catalyzes the reversible interconversion of serine and glycine with tetrahydrofolate (THF) serving as the one-carbon carrier. This reaction serves as the major source of one-carbon groups required for the biosynthesis of purines, thymidylate, methionine, and other important biomolecules. Also exhibits THF-independent aldolase activity toward beta-hydroxyamino acids, producing glycine and aldehydes, via a retro-aldol mechanism. This chain is Serine hydroxymethyltransferase, found in Streptococcus pyogenes serotype M12 (strain MGAS2096).